Consider the following 451-residue polypeptide: DNA-directed RNA polymerase subunit Rpo1C (451 aa).

Residues 1–68 (MQDIIGKIED…DDDELLDAVE (68 aa)) are unknown. Residues 69-451 (DDYQRILKVQ…SVSVVMKERK (383 aa)) are DNA-directed RNA polymerase subunit Rpo1C.

It belongs to the RNA polymerase beta' chain family. In terms of assembly, part of the RNA polymerase complex.

The protein resides in the cytoplasm. The catalysed reaction is RNA(n) + a ribonucleoside 5'-triphosphate = RNA(n+1) + diphosphate. Its function is as follows. DNA-dependent RNA polymerase (RNAP) catalyzes the transcription of DNA into RNA using the four ribonucleoside triphosphates as substrates. Forms part of the jaw domain. In Methanothermobacter thermautotrophicus (strain ATCC 29096 / DSM 1053 / JCM 10044 / NBRC 100330 / Delta H) (Methanobacterium thermoautotrophicum), this protein is DNA-directed RNA polymerase subunit Rpo1C.